A 304-amino-acid chain; its full sequence is tRNA pseudouridine synthase B (304 aa).

The active-site Nucleophile is D38. Positions 227-302 (LPKVEIYKDF…RIFKLKKVFK (76 aa)) constitute a PUA domain.

It belongs to the pseudouridine synthase TruB family. Type 1 subfamily.

It catalyses the reaction uridine(55) in tRNA = pseudouridine(55) in tRNA. In terms of biological role, responsible for synthesis of pseudouridine from uracil-55 in the psi GC loop of transfer RNAs. This Thermosipho melanesiensis (strain DSM 12029 / CIP 104789 / BI429) protein is tRNA pseudouridine synthase B.